A 213-amino-acid polypeptide reads, in one-letter code: UPF0301 protein RPC_0788 (213 aa).

Residues 1-20 (MDPKSKAPKRDETKGADDAS) form a disordered region.

The protein belongs to the UPF0301 (AlgH) family.

This is UPF0301 protein RPC_0788 from Rhodopseudomonas palustris (strain BisB18).